The chain runs to 504 residues: MSFSVDVLANIAIELQRGIGHQDRFQRLITTLRQVLECDASALLRYDSRQFIPLAIDGLAKDVLGRRFALEGHPRLEAIARAGDVVRFPADSELPDPYDGLIPGQESLKVHACVGLPLFAGQNLIGALTLDGMQPDQFDVFSDEELRLIAALAAGALSNALLIEQLESQNMLPGDAAPFEAVKQTQMIGLSPGMTQLKKEIEIVAASDLNVLISGETGTGKELVAKAIHEASPRAVNPLVYLNCAALPESVAESELFGHVKGAFTGAISNRSGKFEMADNGTLFLDEIGELSLALQAKLLRVLQYGDIQRVGDDRSLRVDVRVLAATNRDLREEVLAGRFRADLFHRLSVFPLSVPPLRERGDDVILLAGYFCEQCRLRLGLSRVVLSARARNLLQHYNFPGNVRELEHAIHRAVVLARATRSGDEVILEAQHFAFPEVTLPPPEAAAVPIVKQNLREATEAFQRETIRQALAQNHHNWAASARMLETDVANLHRLAKRLGLKD.

At aspartate 57 the chain carries 4-aspartylphosphate. A Sigma-54 factor interaction domain is found at 187 to 416 (MIGLSPGMTQ…LEHAIHRAVV (230 aa)). ATP contacts are provided by residues 215–222 (GETGTGKE) and 278–287 (ADNGTLFLDE). The segment at residues 479–498 (WAASARMLETDVANLHRLAK) is a DNA-binding region (H-T-H motif).

It functions in the pathway nitrogen metabolism; nitric oxide reduction. In terms of biological role, required for the expression of anaerobic nitric oxide (NO) reductase, acts as a transcriptional activator for at least the norVW operon. Activation also requires sigma-54. This Escherichia coli (strain SMS-3-5 / SECEC) protein is Anaerobic nitric oxide reductase transcription regulator NorR.